The sequence spans 64 residues: MLTREQFEKIIKLAHDIEIDSYQLAVEHCEGYSYDGIEAAKRDLDKSKAKLVQYLEMIRWNNEN.

This is an uncharacterized protein from Enterobacteria phage T4 (Bacteriophage T4).